A 291-amino-acid polypeptide reads, in one-letter code: Protease HtpX homolog (291 aa).

Helical transmembrane passes span 4-24 and 39-59; these read IVLF…TMRL and TSLL…SLAI. A Zn(2+)-binding site is contributed by H145. E146 is an active-site residue. Position 149 (H149) interacts with Zn(2+). Helical transmembrane passes span 156 to 176 and 195 to 215; these read VTLA…SRII and FFVT…IIVM. E222 provides a ligand contact to Zn(2+).

It belongs to the peptidase M48B family. Zn(2+) serves as cofactor.

The protein resides in the cell inner membrane. The protein is Protease HtpX homolog of Thiobacillus denitrificans (strain ATCC 25259 / T1).